Here is a 206-residue protein sequence, read N- to C-terminus: Cytochrome c oxidase assembly protein CtaG (206 aa).

Residues 1 to 17 (MPEVQPSALPKPAPRLG) lie on the Cytoplasmic side of the membrane. The chain crosses the membrane as a helical; Signal-anchor for type II membrane protein span at residues 18–40 (RDAAVASICGFVVALMVGASFAA). Topologically, residues 41-206 (VPFYDWFCRT…GEPDQRKGNL (166 aa)) are periplasmic.

The protein belongs to the COX11/CtaG family.

It is found in the cell inner membrane. Exerts its effect at some terminal stage of cytochrome c oxidase synthesis, probably by being involved in the insertion of the copper B into subunit I. This chain is Cytochrome c oxidase assembly protein CtaG, found in Rhodopseudomonas palustris (strain BisB5).